We begin with the raw amino-acid sequence, 110 residues long: Nucleoid-associated protein KPN78578_04440 (110 aa).

The protein belongs to the YbaB/EbfC family. In terms of assembly, homodimer.

The protein resides in the cytoplasm. It localises to the nucleoid. Its function is as follows. Binds to DNA and alters its conformation. May be involved in regulation of gene expression, nucleoid organization and DNA protection. This Klebsiella pneumoniae subsp. pneumoniae (strain ATCC 700721 / MGH 78578) protein is Nucleoid-associated protein KPN78578_04440.